Here is a 388-residue protein sequence, read N- to C-terminus: Acetate kinase (388 aa).

Position 7 (N7) interacts with Mg(2+). Position 14 (K14) interacts with ATP. Substrate is bound at residue R76. D133 functions as the Proton donor/acceptor in the catalytic mechanism. Residues 193 to 197 (HLGNG), 267 to 269 (DMR), and 315 to 319 (GIGEN) contribute to the ATP site. E374 is a binding site for Mg(2+).

It belongs to the acetokinase family. In terms of assembly, homodimer. Mg(2+) serves as cofactor. Requires Mn(2+) as cofactor.

The protein localises to the cytoplasm. The enzyme catalyses acetate + ATP = acetyl phosphate + ADP. Its pathway is metabolic intermediate biosynthesis; acetyl-CoA biosynthesis; acetyl-CoA from acetate: step 1/2. Functionally, catalyzes the formation of acetyl phosphate from acetate and ATP. Can also catalyze the reverse reaction. The chain is Acetate kinase from Micrococcus luteus (strain ATCC 4698 / DSM 20030 / JCM 1464 / CCM 169 / CCUG 5858 / IAM 1056 / NBRC 3333 / NCIMB 9278 / NCTC 2665 / VKM Ac-2230) (Micrococcus lysodeikticus).